Here is a 384-residue protein sequence, read N- to C-terminus: uncharacterized protein (384 aa).

The region spanning 137–303 (EHDAPNRLWQ…VPGSRYQPSA (167 aa)) is the Integrase catalytic domain.

This is an uncharacterized protein from Escherichia coli (strain K12).